Here is a 618-residue protein sequence, read N- to C-terminus: Zinc finger protein 48 (618 aa).

M1 carries the N-acetylmethionine modification. Basic and acidic residues-rich tracts occupy residues M1–R22 and E39–F51. Disordered regions lie at residues M1–F51 and L78–D109. A Glycyl lysine isopeptide (Lys-Gly) (interchain with G-Cter in SUMO2) cross-link involves residue K87. 2 consecutive C2H2-type zinc fingers follow at residues A112 to H134 and Y140 to H162. The segment at K157–E189 is disordered. K179 is covalently cross-linked (Glycyl lysine isopeptide (Lys-Gly) (interchain with G-Cter in SUMO2)). 2 C2H2-type zinc fingers span residues T192 to H214 and Y220 to H242. Residues R235–Q271 are disordered. A Glycyl lysine isopeptide (Lys-Gly) (interchain with G-Cter in SUMO2) cross-link involves residue K269. 2 consecutive C2H2-type zinc fingers follow at residues Y275 to H297 and F303 to H325. K329 is covalently cross-linked (Glycyl lysine isopeptide (Lys-Gly) (interchain with G-Cter in SUMO2)). 2 consecutive C2H2-type zinc fingers follow at residues Y331 to H353 and H359 to H381. The span at Y392–P414 shows a compositional bias: pro residues. A disordered region spans residues Y392 to G457. A compositionally biased stretch (low complexity) spans R415 to E432. A C2H2-type 9 zinc finger spans residues H451–H473. K477 is covalently cross-linked (Glycyl lysine isopeptide (Lys-Gly) (interchain with G-Cter in SUMO2)). The C2H2-type 10 zinc finger occupies Y479–H501. Positions T500 to S540 are disordered. Pro residues predominate over residues P508–P528. C2H2-type zinc fingers lie at residues H543 to H565 and Y571 to H593. K610 is covalently cross-linked (Glycyl lysine isopeptide (Lys-Gly) (interchain with G-Cter in SUMO2)).

The protein belongs to the krueppel C2H2-type zinc-finger protein family.

It localises to the nucleus. In terms of biological role, may be involved in transcriptional regulation. The protein is Zinc finger protein 48 (ZNF48) of Homo sapiens (Human).